The chain runs to 500 residues: Probable cytosol aminopeptidase (500 aa).

The Mn(2+) site is built by lysine 265 and aspartate 270. Lysine 277 is a catalytic residue. Mn(2+) contacts are provided by aspartate 288, aspartate 347, and glutamate 349. Arginine 351 is a catalytic residue.

The protein belongs to the peptidase M17 family. Mn(2+) serves as cofactor.

The protein resides in the cytoplasm. The enzyme catalyses Release of an N-terminal amino acid, Xaa-|-Yaa-, in which Xaa is preferably Leu, but may be other amino acids including Pro although not Arg or Lys, and Yaa may be Pro. Amino acid amides and methyl esters are also readily hydrolyzed, but rates on arylamides are exceedingly low.. It carries out the reaction Release of an N-terminal amino acid, preferentially leucine, but not glutamic or aspartic acids.. Its function is as follows. Presumably involved in the processing and regular turnover of intracellular proteins. Catalyzes the removal of unsubstituted N-terminal amino acids from various peptides. The polypeptide is Probable cytosol aminopeptidase (Rickettsia rickettsii (strain Iowa)).